We begin with the raw amino-acid sequence, 986 residues long: Anoctamin-1 (986 aa).

At 1-333 the chain is on the cytoplasmic side; sequence MRVNEKYSTL…FGEKIGLYFA (333 aa). Residues 79–121 are disordered; the sequence is LVRRVQHSDTPSGARSVKQDHPLPGKGASLDAGSGEPPMDYHE. Ser107 and Ser196 each carry phosphoserine. A helical transmembrane segment spans residues 334–354; that stretch reads WLGVYTQMLIPASIVGIIVFL. The Extracellular portion of the chain corresponds to 355 to 406; that stretch reads YGCATMDENIPSMEMCDQRHNITMCPLCDKTCSYWKMSSACATARASHLFDN. 4 cysteine pairs are disulfide-bonded: Cys370/Cys395, Cys379/Cys862, Cys382/Cys386, and Cys651/Cys656. The chain crosses the membrane as a helical span at residues 407 to 427; it reads PATVFFSVFMALWAATFMEHW. Glu425 lines the Ca(2+) pocket. Residues 428–519 lie on the Cytoplasmic side of the membrane; the sequence is KRKQMRLNYR…RDRFPAYLTN (92 aa). The chain crosses the membrane as a helical span at residues 520 to 540; that stretch reads LVSIIFMIAVTFAIVLGVIIY. The Extracellular portion of the chain corresponds to 541–568; the sequence is RISMAAALAMNSSPSVRSNIRVTVTATA. A helical transmembrane segment spans residues 569–589; it reads VIINLVVIILLDEVYGCIARW. The Cytoplasmic segment spans residues 590-607; the sequence is LTKIEVPKTEKSFEERLI. A helical transmembrane segment spans residues 608–628; it reads FKAFLLKFVNSYTPIFYVAFF. Residues 629–657 lie on the Extracellular side of the membrane; that stretch reads KGRFVGRPGDYVYIFRSFRMEECAPGGCL. Residues 658 to 678 traverse the membrane as a helical segment; sequence MELCIQLSIIMLGKQLIQNNL. Ca(2+) is bound by residues Asn677, Glu680, Glu728, Glu731, Glu760, and Asp764. At 679-725 the chain is on the cytoplasmic side; that stretch reads FEIGIPKMKKLIRYLKLKQQSPPDHEECVKRKQRYEVDYNLEPFAGL. 2 helical membrane-spanning segments follow: residues 726-746 and 747-767; these read TPEYMEMIIQFGFVTLFVASF and PLAPLFALLNNIIEIRLDAKK. Residues 768 to 784 are Cytoplasmic-facing; sequence FVTELRRPVAVRAKDIG. A helical transmembrane segment spans residues 785–805; sequence IWYNILRGIGKLAVIINAFVI. Residues 806–892 are Extracellular-facing; that stretch reads SFTSDFIPRL…FWAVLAARLA (87 aa). N-linked (GlcNAc...) asparagine glycosylation occurs at Asn832. The chain crosses the membrane as a helical span at residues 893–913; that stretch reads FVIVFQNLVMFMSDFVDWVIP. Residues Asp909 and Asp914 each coordinate Ca(2+). Residues 914–986 lie on the Cytoplasmic side of the membrane; sequence DIPKDISQQI…PSHAYHGGVL (73 aa). The segment covering 951–960 has biased composition (basic and acidic residues); the sequence is KERQKDEPPC. The interval 951–986 is disordered; the sequence is KERQKDEPPCNHHNTKACPDSLGSPAPSHAYHGGVL.

This sequence belongs to the anoctamin family. As to quaternary structure, homodimer. Interacts with CFTR. Interacts with TRPV4. Expressed in nasal epithelial cells (at protein level). In the kidney, expressed in the collecting duct (at protein level). Broadly expressed with higher levels in liver, skeletal muscle and gastrointestinal muscles. Expressed in eccrine sweat glands.

It localises to the apical cell membrane. The protein localises to the presynapse. It carries out the reaction chloride(in) = chloride(out). ATP and calmodulin are essential for its activation. Channel activity is inhibited by CFTR protein and by chloride inhibitors such as niflumic acid (NFA) and 4,4'-diisothiocyanatostilbene-2,2'-disulfonic acid (DIDS). Activated by heat with activation seen at temperatures above 44 degrees Celsius. Activated by BDNF in radial glial cells. In terms of biological role, calcium-activated chloride channel (CaCC). Plays a role in transepithelial anion transport and smooth muscle contraction. Required for the normal functioning of the interstitial cells of Cajal (ICCs) which generate electrical pacemaker activity in gastrointestinal smooth muscles. Acts as a major contributor to basal and stimulated chloride conductance in airway epithelial cells and plays an important role in tracheal cartilage development. Required for CFTR activation by enhancing endoplasmic reticulum Ca(2+) store release and is also required for CFTR membrane expression. Required for basal and ATP-dependent mucus secretion in airways and intestine, probably by controlling exocytosis of mucus-filled granules by providing Ca(2+) to an apical signaling compartment. Contributes to airway mucus expression induced by interleukins IL3 and IL8 and by the asthma-associated protein CLCA1 and is required for expression of mucin MUC5AC. However, was shown in another study not to be required for MUC5AC expression. Plays a role in the propagation of Ca(2+) waves in Kolliker's organ in the cochlea and contributes to the refinement of auditory brainstem circuitries prior to hearing onset. In vomeronasal sensory neurons, modulates spontaneous firing patterns in the absence of stimuli as well as the firing pattern of pheromone-evoked activity. Responsible for calcium-activated chloride channel activity in type I taste cells of the vallate papillae. Acts as a heat sensor in nociceptive neurons. In dorsal root ganglion neurons, plays a role in mediating non-histaminergic Mas-related G-protein coupled receptor (MRGPR)-dependent itching, acting as a downstream effector of MRGPRs. In the developing brain, required for the Ca(2+)-dependent process extension of radial glial cells. Functionally, calcium-activated chloride channel (CaCC). Contributes to calcium-activated chloride secretion in human sweat gland epithelial cells. Shows increased basal chloride permeability and decreased Ca(2+)-induced chloride permeability. Its function is as follows. Calcium-activated chloride channel (CaCC). Shows increased sensitivity to intracellular Ca(2+). This chain is Anoctamin-1 (ANO1), found in Homo sapiens (Human).